Consider the following 327-residue polypeptide: Gibberellin 2-beta-dioxygenase 3 (327 aa).

In terms of domain architecture, Fe2OG dioxygenase spans Gly173–Pro278. A 2-oxoglutarate-binding site is contributed by Tyr183. The Fe cation site is built by His202, Asp204, and His259. 2-oxoglutarate-binding residues include Arg269 and Ser271.

This sequence belongs to the iron/ascorbate-dependent oxidoreductase family. GA2OX subfamily. Requires L-ascorbate as cofactor. It depends on Fe(2+) as a cofactor. Expressed in roots, shoot apex, leaf blades, leaf sheaths, stems and flowers.

The enzyme catalyses gibberellin A1 + 2-oxoglutarate + O2 = gibberellin A8 + succinate + CO2. In terms of biological role, catalyzes the 2-beta-hydroxylation of several biologically active gibberellins, leading to the homeostatic regulation of their endogenous level. Catabolism of gibberellins (GAs) plays a central role in plant development. In vitro, converts GA1, GA20, and GA29 to the corresponding 2-beta-hydroxylated products GA8, GA29-catabolite, respectively. The sequence is that of Gibberellin 2-beta-dioxygenase 3 from Oryza sativa subsp. japonica (Rice).